A 389-amino-acid polypeptide reads, in one-letter code: Serpentine receptor class alpha/beta-14 (389 aa).

The Extracellular portion of the chain corresponds to 1 to 45 (MPSDDFVKTARKALISHSVSIQNYTEDDCQIAFHATTNSFMQTIR). Asn23 carries an N-linked (GlcNAc...) asparagine glycan. The helical transmembrane segment at 46 to 66 (LVHIFFCTFGAISSSLFIYVL) threads the bilayer. At 67–81 (LNSSSRNLHRNLRIS) the chain is on the cytoplasmic side. A helical transmembrane segment spans residues 82 to 102 (LASLAFAALIACLQLDFIAFY). Residues 103-123 (HLALTLTADNACDSMYEARKC) lie on the Extracellular side of the membrane. Cys123 and Cys198 form a disulfide bridge. A helical transmembrane segment spans residues 124 to 144 (AILRFPVVLSIYATLCGIIVL). The Cytoplasmic segment spans residues 145–167 (AIERTIATLKYKTYEANGSRVVG). A helical transmembrane segment spans residues 168–188 (LVLVTGQWFVCIIVAVFSVLL). The Extracellular portion of the chain corresponds to 189–208 (RSDPGYVHYCTAYVSHPRTS). The chain crosses the membrane as a helical span at residues 209–229 (VFSLCFMSALEVATLVYFVLL). Residues 230–268 (LQSNQRRQVNEFVNKAMHSLSERYQLQENVRIMKILIPS) lie on the Cytoplasmic side of the membrane. A helical membrane pass occupies residues 269-289 (ITVHAILGFIGLGSMLAFAII). Over 290 to 303 (YRYADERLIVGFAP) the chain is Extracellular. A helical transmembrane segment spans residues 304–324 (FSEVVLLVIPIYAVVFPIVAV). The Cytoplasmic portion of the chain corresponds to 325 to 389 (VQNKQLRLAS…FDLLNEMWKK (65 aa)).

This sequence belongs to the nematode receptor-like protein srab family.

The protein localises to the membrane. In Caenorhabditis elegans, this protein is Serpentine receptor class alpha/beta-14.